Consider the following 454-residue polypeptide: Bifunctional protein GlmU (454 aa).

A pyrophosphorylase region spans residues 1–228 (MTLPLHVVIL…PQDVEGANDP (228 aa)). UDP-N-acetyl-alpha-D-glucosamine-binding positions include 10–13 (LAAG), Lys-24, Gln-76, 81–82 (GT), 103–105 (YGD), Gly-138, Glu-153, Asn-168, and Asn-226. Asp-105 lines the Mg(2+) pocket. Residue Asn-226 participates in Mg(2+) binding. The tract at residues 229–249 (WQLAQLERAWQLRAARALSLQ) is linker. The tract at residues 250 to 454 (GVRMADPARV…IEGWERPTKK (205 aa)) is N-acetyltransferase. Residues Arg-332 and Lys-350 each contribute to the UDP-N-acetyl-alpha-D-glucosamine site. His-362 (proton acceptor) is an active-site residue. Tyr-365 and Asn-376 together coordinate UDP-N-acetyl-alpha-D-glucosamine. Acetyl-CoA contacts are provided by residues Ala-379, 385–386 (NY), Ser-404, Ala-422, and Arg-439.

In the N-terminal section; belongs to the N-acetylglucosamine-1-phosphate uridyltransferase family. The protein in the C-terminal section; belongs to the transferase hexapeptide repeat family. Homotrimer. The cofactor is Mg(2+).

It localises to the cytoplasm. It catalyses the reaction alpha-D-glucosamine 1-phosphate + acetyl-CoA = N-acetyl-alpha-D-glucosamine 1-phosphate + CoA + H(+). The enzyme catalyses N-acetyl-alpha-D-glucosamine 1-phosphate + UTP + H(+) = UDP-N-acetyl-alpha-D-glucosamine + diphosphate. Its pathway is nucleotide-sugar biosynthesis; UDP-N-acetyl-alpha-D-glucosamine biosynthesis; N-acetyl-alpha-D-glucosamine 1-phosphate from alpha-D-glucosamine 6-phosphate (route II): step 2/2. It participates in nucleotide-sugar biosynthesis; UDP-N-acetyl-alpha-D-glucosamine biosynthesis; UDP-N-acetyl-alpha-D-glucosamine from N-acetyl-alpha-D-glucosamine 1-phosphate: step 1/1. The protein operates within bacterial outer membrane biogenesis; LPS lipid A biosynthesis. Functionally, catalyzes the last two sequential reactions in the de novo biosynthetic pathway for UDP-N-acetylglucosamine (UDP-GlcNAc). The C-terminal domain catalyzes the transfer of acetyl group from acetyl coenzyme A to glucosamine-1-phosphate (GlcN-1-P) to produce N-acetylglucosamine-1-phosphate (GlcNAc-1-P), which is converted into UDP-GlcNAc by the transfer of uridine 5-monophosphate (from uridine 5-triphosphate), a reaction catalyzed by the N-terminal domain. The polypeptide is Bifunctional protein GlmU (Xanthomonas oryzae pv. oryzae (strain MAFF 311018)).